Consider the following 78-residue polypeptide: Acyl carrier protein (78 aa).

The region spanning 2 to 77 is the Carrier domain; that stretch reads SSIEERVKKI…LAIDYINANL (76 aa). At Ser-37 the chain carries O-(pantetheine 4'-phosphoryl)serine.

Belongs to the acyl carrier protein (ACP) family. Post-translationally, 4'-phosphopantetheine is transferred from CoA to a specific serine of apo-ACP by AcpS. This modification is essential for activity because fatty acids are bound in thioester linkage to the sulfhydryl of the prosthetic group.

The protein resides in the cytoplasm. It functions in the pathway lipid metabolism; fatty acid biosynthesis. In terms of biological role, carrier of the growing fatty acid chain in fatty acid biosynthesis. The chain is Acyl carrier protein from Cellvibrio japonicus (strain Ueda107) (Pseudomonas fluorescens subsp. cellulosa).